The primary structure comprises 738 residues: DNA ligase (738 aa).

NAD(+)-binding positions include 48–52 (DVVYD), 97–98 (SL), and E136. K138 serves as the catalytic N6-AMP-lysine intermediate. 4 residues coordinate NAD(+): R159, E196, K356, and K380. Residues C474, C477, C492, and C497 each coordinate Zn(2+). The BRCT domain occupies 659 to 738 (QLPQPLAGKT…SQLLELLEET (80 aa)).

It belongs to the NAD-dependent DNA ligase family. LigA subfamily. It depends on Mg(2+) as a cofactor. Mn(2+) is required as a cofactor.

It catalyses the reaction NAD(+) + (deoxyribonucleotide)n-3'-hydroxyl + 5'-phospho-(deoxyribonucleotide)m = (deoxyribonucleotide)n+m + AMP + beta-nicotinamide D-nucleotide.. DNA ligase that catalyzes the formation of phosphodiester linkages between 5'-phosphoryl and 3'-hydroxyl groups in double-stranded DNA using NAD as a coenzyme and as the energy source for the reaction. It is essential for DNA replication and repair of damaged DNA. This is DNA ligase from Cyanothece sp. (strain PCC 7425 / ATCC 29141).